The sequence spans 929 residues: ATP-dependent DNA helicase PIF1 (929 aa).

Residues methionine 1 to phenylalanine 52 constitute a mitochondrion transit peptide. The tract at residues glycine 55–threonine 89 is disordered. Residues threonine 56–arginine 66 are compositionally biased toward basic and acidic residues. Positions alanine 74 to threonine 89 are enriched in polar residues. Glycine 302 to threonine 309 contributes to the ATP binding site. Residues histidine 776 to phenylalanine 796 mediate DNA binding. Residues histidine 902–glutamate 929 form a disordered region. Over residues glutamine 916 to glutamate 929 the composition is skewed to polar residues.

It belongs to the helicase family. PIF1 subfamily. Monomer. The cofactor is Mg(2+).

The protein resides in the mitochondrion. The enzyme catalyses Couples ATP hydrolysis with the unwinding of duplex DNA at the replication fork by translocating in the 5'-3' direction. This creates two antiparallel DNA single strands (ssDNA). The leading ssDNA polymer is the template for DNA polymerase III holoenzyme which synthesizes a continuous strand.. It catalyses the reaction ATP + H2O = ADP + phosphate + H(+). In terms of biological role, DNA-dependent ATPase and probable 5'-3' DNA helicase required for the maintenance of mitochondrial (kinetoplast) genome stability. Essential for replication of kinetoplast minicircles. Involved in the segregation of minicircle progeny. This is ATP-dependent DNA helicase PIF1 from Trypanosoma brucei brucei (strain 927/4 GUTat10.1).